The following is a 1018-amino-acid chain: Transmembrane protein 132A (1018 aa).

The signal sequence occupies residues 1 to 32; it reads MTERKAAAPRGPYGAWFCLLVALALEVVRVSS. Residues 33–846 are Extracellular-facing; that stretch reads NHDTLDPIYL…VTDLELGMYA (814 aa). An N-linked (GlcNAc...) asparagine glycan is attached at Asn276. Positions 606-911 are binds to HSPA5/GRP78; it reads IEVRSPLSDA…QLDRCSSSGP (306 aa). The tract at residues 666–1018 is confers cellular localization similar to full-length form; that stretch reads LPAPKQEVAL…NYMERIRGSS (353 aa). The span at 807–818 shows a compositional bias: basic and acidic residues; the sequence is ERAEEEAGKEEN. Positions 807–833 are disordered; the sequence is ERAEEEAGKEENEAKEEEEDEEEMVPA. Over residues 819–830 the composition is skewed to acidic residues; it reads EAKEEEEDEEEM. Residues 847 to 867 traverse the membrane as a helical segment; that stretch reads LLGIFCLAILIFLVNGVVFVL. Residues 868-1018 are Cytoplasmic-facing; that stretch reads RYQRKEPPDS…NYMERIRGSS (151 aa). Residues 900-956 are disordered; the sequence is SRQLDRCSSSGPPKGEGGCPCESGAGGDASTVAPSASESPAGSSSTLARKEAGGRRK. Composition is skewed to low complexity over residues 906 to 922 and 932 to 944; these read CSSSGPPKGEGGCPCES and APSASESPAGSSS.

Belongs to the TMEM132 family. Interacts with HSPA5/GRP78.

The protein localises to the golgi apparatus membrane. It localises to the endoplasmic reticulum membrane. Its function is as follows. May play a role in embryonic and postnatal development of the brain. Increased resistance to cell death induced by serum starvation in cultured cells. Regulates cAMP-induced GFAP gene expression via STAT3 phosphorylation. This Mus musculus (Mouse) protein is Transmembrane protein 132A (Tmem132a).